We begin with the raw amino-acid sequence, 382 residues long: Anhydro-N-acetylmuramic acid kinase (382 aa).

9–16 is an ATP binding site; the sequence is GTSLDGID.

This sequence belongs to the anhydro-N-acetylmuramic acid kinase family.

It carries out the reaction 1,6-anhydro-N-acetyl-beta-muramate + ATP + H2O = N-acetyl-D-muramate 6-phosphate + ADP + H(+). The protein operates within amino-sugar metabolism; 1,6-anhydro-N-acetylmuramate degradation. It functions in the pathway cell wall biogenesis; peptidoglycan recycling. In terms of biological role, catalyzes the specific phosphorylation of 1,6-anhydro-N-acetylmuramic acid (anhMurNAc) with the simultaneous cleavage of the 1,6-anhydro ring, generating MurNAc-6-P. Is required for the utilization of anhMurNAc either imported from the medium or derived from its own cell wall murein, and thus plays a role in cell wall recycling. In Bacillus cereus (strain 03BB102), this protein is Anhydro-N-acetylmuramic acid kinase.